Consider the following 348-residue polypeptide: Phospho-2-dehydro-3-deoxyheptonate aldolase, Trp-sensitive (348 aa).

The protein belongs to the class-I DAHP synthase family.

The enzyme catalyses D-erythrose 4-phosphate + phosphoenolpyruvate + H2O = 7-phospho-2-dehydro-3-deoxy-D-arabino-heptonate + phosphate. Its pathway is metabolic intermediate biosynthesis; chorismate biosynthesis; chorismate from D-erythrose 4-phosphate and phosphoenolpyruvate: step 1/7. Stereospecific condensation of phosphoenolpyruvate (PEP) and D-erythrose-4-phosphate (E4P) giving rise to 3-deoxy-D-arabino-heptulosonate-7-phosphate (DAHP). The polypeptide is Phospho-2-dehydro-3-deoxyheptonate aldolase, Trp-sensitive (aroH) (Salmonella typhi).